We begin with the raw amino-acid sequence, 273 residues long: Pantothenate synthetase (273 aa).

Residue 27 to 34 coordinates ATP; it reads MGALHQGH. The Proton donor role is filled by H34. Q58 is a (R)-pantoate binding site. Beta-alanine is bound at residue Q58. ATP is bound at residue 144–147; it reads GKKD. Residue Q150 participates in (R)-pantoate binding. ATP-binding positions include V173 and 181–184; that span reads LSSR.

It belongs to the pantothenate synthetase family. In terms of assembly, homodimer.

The protein localises to the cytoplasm. It catalyses the reaction (R)-pantoate + beta-alanine + ATP = (R)-pantothenate + AMP + diphosphate + H(+). Its pathway is cofactor biosynthesis; (R)-pantothenate biosynthesis; (R)-pantothenate from (R)-pantoate and beta-alanine: step 1/1. Catalyzes the condensation of pantoate with beta-alanine in an ATP-dependent reaction via a pantoyl-adenylate intermediate. This is Pantothenate synthetase from Nitratiruptor sp. (strain SB155-2).